A 480-amino-acid chain; its full sequence is Probable pectin lyase F-2 (480 aa).

A signal peptide spans 1–25 (MTLIRTVLMAAALLGASAHAQGVVG). Residues Cys-83 and Cys-106 are joined by a disulfide bond. N-linked (GlcNAc...) asparagine glycosylation is present at Asn-111. The active site involves Arg-256. Cysteines 322 and 330 form a disulfide. A compositionally biased stretch (low complexity) spans 386–401 (SSSAIPSSTPAPSSSA). Positions 386–436 (SSSAIPSSTPAPSSSALAKRHGGHDRHGLGHIPHLTEGGPGAWHTPGPAPS) are disordered.

This sequence belongs to the polysaccharide lyase 1 family.

It is found in the secreted. It carries out the reaction Eliminative cleavage of (1-&gt;4)-alpha-D-galacturonan methyl ester to give oligosaccharides with 4-deoxy-6-O-methyl-alpha-D-galact-4-enuronosyl groups at their non-reducing ends.. Pectinolytic enzymes consist of four classes of enzymes: pectin lyase, polygalacturonase, pectin methylesterase and rhamnogalacturonase. Among pectinolytic enzymes, pectin lyase is the most important in depolymerization of pectin, since it cleaves internal glycosidic bonds of highly methylated pectins. This chain is Probable pectin lyase F-2 (pelF-2), found in Aspergillus terreus (strain NIH 2624 / FGSC A1156).